The chain runs to 428 residues: Tyrosine--tRNA ligase (428 aa).

Y34 contacts L-tyrosine. The short motif at 39–48 (PTADSLHIGH) is the 'HIGH' region element. The L-tyrosine site is built by Y171 and Q175. Residues 236–240 (KFGKT) carry the 'KMSKS' region motif. Position 239 (K239) interacts with ATP. In terms of domain architecture, S4 RNA-binding spans 358-424 (VGLIDLLVDA…GKKKYFLIQV (67 aa)).

It belongs to the class-I aminoacyl-tRNA synthetase family. TyrS type 1 subfamily. Homodimer.

The protein localises to the cytoplasm. It catalyses the reaction tRNA(Tyr) + L-tyrosine + ATP = L-tyrosyl-tRNA(Tyr) + AMP + diphosphate + H(+). Catalyzes the attachment of tyrosine to tRNA(Tyr) in a two-step reaction: tyrosine is first activated by ATP to form Tyr-AMP and then transferred to the acceptor end of tRNA(Tyr). This Oceanobacillus iheyensis (strain DSM 14371 / CIP 107618 / JCM 11309 / KCTC 3954 / HTE831) protein is Tyrosine--tRNA ligase.